Here is a 139-residue protein sequence, read N- to C-terminus: Small ribosomal subunit protein uS12 (139 aa).

Position 102 is a 3-methylthioaspartic acid (D102).

This sequence belongs to the universal ribosomal protein uS12 family. As to quaternary structure, part of the 30S ribosomal subunit. Contacts proteins S8 and S17. May interact with IF1 in the 30S initiation complex.

Functionally, with S4 and S5 plays an important role in translational accuracy. Interacts with and stabilizes bases of the 16S rRNA that are involved in tRNA selection in the A site and with the mRNA backbone. Located at the interface of the 30S and 50S subunits, it traverses the body of the 30S subunit contacting proteins on the other side and probably holding the rRNA structure together. The combined cluster of proteins S8, S12 and S17 appears to hold together the shoulder and platform of the 30S subunit. The chain is Small ribosomal subunit protein uS12 from Bacillus pumilus (strain SAFR-032).